The primary structure comprises 281 residues: Nucleotide-binding protein Noc_2797 (281 aa).

8 to 15 serves as a coordination point for ATP; sequence GVSGSGKS. 58-61 provides a ligand contact to GTP; sequence DARN.

Belongs to the RapZ-like family.

Displays ATPase and GTPase activities. The protein is Nucleotide-binding protein Noc_2797 of Nitrosococcus oceani (strain ATCC 19707 / BCRC 17464 / JCM 30415 / NCIMB 11848 / C-107).